The chain runs to 133 residues: Small ribosomal subunit protein uS8 (133 aa).

Belongs to the universal ribosomal protein uS8 family. Part of the 30S ribosomal subunit.

In terms of biological role, one of the primary rRNA binding proteins, it binds directly to 16S rRNA central domain where it helps coordinate assembly of the platform of the 30S subunit. The polypeptide is Small ribosomal subunit protein uS8 (Hyperthermus butylicus (strain DSM 5456 / JCM 9403 / PLM1-5)).